The sequence spans 354 residues: Peptide chain release factor 1 (354 aa).

Q232 is subject to N5-methylglutamine.

The protein belongs to the prokaryotic/mitochondrial release factor family. Post-translationally, methylated by PrmC. Methylation increases the termination efficiency of RF1.

It is found in the cytoplasm. In terms of biological role, peptide chain release factor 1 directs the termination of translation in response to the peptide chain termination codons UAG and UAA. This chain is Peptide chain release factor 1, found in Jannaschia sp. (strain CCS1).